The chain runs to 185 residues: Elongation factor P (185 aa).

The protein belongs to the elongation factor P family.

It localises to the cytoplasm. Its pathway is protein biosynthesis; polypeptide chain elongation. Functionally, involved in peptide bond synthesis. Stimulates efficient translation and peptide-bond synthesis on native or reconstituted 70S ribosomes in vitro. Probably functions indirectly by altering the affinity of the ribosome for aminoacyl-tRNA, thus increasing their reactivity as acceptors for peptidyl transferase. In Agathobacter rectalis (strain ATCC 33656 / DSM 3377 / JCM 17463 / KCTC 5835 / VPI 0990) (Eubacterium rectale), this protein is Elongation factor P.